The primary structure comprises 415 residues: 3-oxoacyl-[acyl-carrier-protein] synthase 2 (415 aa).

Residues 3-412 enclose the Ketosynthase family 3 (KS3) domain; that stretch reads KRRVVVTGMG…GTNGSLVFKK (410 aa). Active-site for beta-ketoacyl synthase activity residues include cysteine 164, histidine 304, and histidine 342.

This sequence belongs to the thiolase-like superfamily. Beta-ketoacyl-ACP synthases family. Homodimer.

The catalysed reaction is a fatty acyl-[ACP] + malonyl-[ACP] + H(+) = a 3-oxoacyl-[ACP] + holo-[ACP] + CO2. It carries out the reaction (9Z)-hexadecenoyl-[ACP] + malonyl-[ACP] + H(+) = 3-oxo-(11Z)-octadecenoyl-[ACP] + holo-[ACP] + CO2. It participates in lipid metabolism; fatty acid biosynthesis. Its function is as follows. Involved in the type II fatty acid elongation cycle. Catalyzes the elongation of a wide range of acyl-ACP by the addition of two carbons from malonyl-ACP to an acyl acceptor. Can efficiently catalyze the conversion of palmitoleoyl-ACP (cis-hexadec-9-enoyl-ACP) to cis-vaccenoyl-ACP (cis-octadec-11-enoyl-ACP), an essential step in the thermal regulation of fatty acid composition. This Vibrio harveyi (Beneckea harveyi) protein is 3-oxoacyl-[acyl-carrier-protein] synthase 2 (fabF).